A 619-amino-acid chain; its full sequence is Replication restart protein PriA (619 aa).

Positions 119–285 (LKELQKHPAS…KDKALVRLKG (167 aa)) constitute a Helicase ATP-binding domain. Position 132 to 139 (132 to 139 (GDTGSGKT)) interacts with ATP. Positions 228–231 (DEEH) match the DEAH box motif. Zn(2+) contacts are provided by cysteine 336, cysteine 339, cysteine 345, cysteine 348, cysteine 363, cysteine 366, cysteine 376, and cysteine 379. Residues 371-532 (PIPKICNACQ…ELYPPFSRLC (162 aa)) enclose the Helicase C-terminal domain.

The protein belongs to the helicase family. PriA subfamily. Component of the replication restart primosome. Requires Zn(2+) as cofactor.

It carries out the reaction Couples ATP hydrolysis with the unwinding of duplex DNA by translocating in the 3'-5' direction.. The catalysed reaction is ATP + H2O = ADP + phosphate + H(+). Functionally, initiates the restart of stalled replication forks, which reloads the replicative helicase on sites other than the origin of replication. Recognizes and binds to abandoned replication forks and remodels them to uncover a helicase loading site. Promotes assembly of the primosome at these replication forks. The polypeptide is Replication restart protein PriA (Helicobacter pylori (strain J99 / ATCC 700824) (Campylobacter pylori J99)).